The following is a 550-amino-acid chain: Solute carrier family 22 member 6 (550 aa).

At 1 to 9 (MAFNDLLQQ) the chain is on the cytoplasmic side. The chain crosses the membrane as a helical span at residues 10–30 (VGGVGRFQQIQVTLVVLPLLL). The Extracellular portion of the chain corresponds to 31-135 (MASHNTVQNF…LVCSHRALRQ (105 aa)). 3 N-linked (GlcNAc...) asparagine glycosylation sites follow: asparagine 56, asparagine 92, and asparagine 113. The chain crosses the membrane as a helical span at residues 136 to 156 (LAQSLYMVGVLLGAMVFGYLA). At 157 to 164 (DRLGRRKV) the chain is on the cytoplasmic side. The chain crosses the membrane as a helical span at residues 165–187 (LILNYLQTAVSGTCAAFAPNFPI). Topologically, residues 188–190 (YCA) are extracellular. Residues 191 to 213 (FRLLSGMSLAGIALNCMTLNVEW) traverse the membrane as a helical segment. Residues 214 to 224 (MPIHTRACVGT) are Cytoplasmic-facing. A helical membrane pass occupies residues 225-245 (LIGYVYSLGQFLLAGVAYAVP). The Extracellular portion of the chain corresponds to 246–248 (HWR). Residues 249-269 (HLQLLISVPFFAFFIYSWFFI) traverse the membrane as a helical segment. Residues 270–337 (ESARWHSSSG…ELLRCPTLRH (68 aa)) are Cytoplasmic-facing. A helical membrane pass occupies residues 338–358 (LFLCLSMLWFATSFAYYGLVM). Over 359–368 (DLQGFGVSIY) the chain is Extracellular. Residues 369–389 (LIQVIFGAVDLPAKLVGFLVI) traverse the membrane as a helical segment. Over 390 to 395 (NSLGRR) the chain is Cytoplasmic. A helical transmembrane segment spans residues 396–416 (PAQMAALLLAGICILLNGVVP). Topologically, residues 417-425 (QDQSVIRTS) are extracellular. The helical transmembrane segment at 426–446 (LAVLGKGCLAASFNCIFLYTG) threads the bilayer. Over 447–456 (ELYPTMIRQT) the chain is Cytoplasmic. Residues 457 to 477 (GLGMGSTMARVGSIVSPLVSM) traverse the membrane as a helical segment. Residues 478-484 (TTELYPS) lie on the Extracellular side of the membrane. Residues 485 to 505 (VPLFIYGAVPVAASAVTVLLP) form a helical membrane-spanning segment. Over 506–550 (ETLGQPLPDTVQDLESRKGKQTPQQQEHQKYMVPLQASAQEKNGL) the chain is Cytoplasmic. The disordered stretch occupies residues 513 to 550 (PDTVQDLESRKGKQTPQQQEHQKYMVPLQASAQEKNGL).

The protein belongs to the major facilitator (TC 2.A.1) superfamily. Organic cation transporter (TC 2.A.1.19) family. Post-translationally, glycosylated. Glycosylation is necessary for proper targeting of the transporter to the plasma membrane. Expressed in kidney; in the basolateral membrane of the proximal tubule.

Its subcellular location is the basolateral cell membrane. It localises to the basal cell membrane. It catalyses the reaction (6R)-L-erythro-5,6,7,8-tetrahydrobiopterin(out) + a dicarboxylate(in) = (6R)-L-erythro-5,6,7,8-tetrahydrobiopterin(in) + a dicarboxylate(out). It carries out the reaction L-erythro-7,8-dihydrobiopterin(out) + a dicarboxylate(in) = L-erythro-7,8-dihydrobiopterin(in) + a dicarboxylate(out). The catalysed reaction is L-sepiapterin(out) + a dicarboxylate(in) = L-sepiapterin(in) + a dicarboxylate(out). The enzyme catalyses prostaglandin F2alpha(out) + a dicarboxylate(in) = prostaglandin F2alpha(in) + a dicarboxylate(out). It catalyses the reaction prostaglandin E2(out) + a dicarboxylate(in) = prostaglandin E2(in) + a dicarboxylate(out). It carries out the reaction 3',5'-cyclic AMP(out) + a dicarboxylate(in) = 3',5'-cyclic AMP(in) + a dicarboxylate(out). The catalysed reaction is 3',5'-cyclic GMP(out) + a dicarboxylate(in) = 3',5'-cyclic GMP(in) + a dicarboxylate(out). The enzyme catalyses urate(out) + a dicarboxylate(in) = urate(in) + a dicarboxylate(out). It catalyses the reaction kynurenate(out) + glutarate(in) = kynurenate(in) + glutarate(out). It carries out the reaction (indol-3-yl)acetate(out) + a dicarboxylate(in) = (indol-3-yl)acetate(in) + a dicarboxylate(out). The catalysed reaction is indoxyl sulfate(out) + a dicarboxylate(in) = indoxyl sulfate(in) + a dicarboxylate(out). The enzyme catalyses N-benzoylglycine(out) + a dicarboxylate(in) = N-benzoylglycine(in) + a dicarboxylate(out). It catalyses the reaction 3-carboxy-4-methyl-5-propyl-2-furanpropanoate(out) + a dicarboxylate(in) = 3-carboxy-4-methyl-5-propyl-2-furanpropanoate(in) + a dicarboxylate(out). Secondary active transporter that functions as a Na(+)-independent organic anion (OA)/dicarboxylate antiporter where the uptake of one molecule of OA into the cell is coupled with an efflux of one molecule of intracellular dicarboxylate such as 2-oxoglutarate or glutarate. Mediates the uptake of OA across the basolateral side of proximal tubule epithelial cells, thereby contributing to the renal elimination of endogenous OA from the systemic circulation into the urine. Functions as a biopterin transporters involved in the uptake and the secretion of coenzymes tetrahydrobiopterin (BH4), dihydrobiopterin (BH2) and sepiapterin to urine, thereby determining baseline levels of blood biopterins. Transports prostaglandin E2 (PGE2) and prostaglandin F2-alpha (PGF2-alpha) and may contribute to their renal excretion. Also mediates the uptake of cyclic nucleotides such as cAMP and cGMP. Involved in the transport of neuroactive tryptophan metabolites kynurenate (KYNA) and xanthurenate (XA) and may contribute to their secretion from the brain. May transport glutamate. Also involved in the disposition of uremic toxins and potentially toxic xenobiotics by the renal organic anion secretory pathway, helping reduce their undesired toxicological effects on the body. Uremic toxins include the indoxyl sulfate (IS), hippurate/N-benzoylglycine (HA), indole acetate (IA), 3-carboxy-4- methyl-5-propyl-2-furanpropionate (CMPF) and urate. Xenobiotics include the mycotoxin ochratoxin (OTA). May also contribute to the transport of organic compounds in testes across the blood-testis-barrier. In Macaca fascicularis (Crab-eating macaque), this protein is Solute carrier family 22 member 6.